The chain runs to 493 residues: 3-octaprenyl-4-hydroxybenzoate carboxy-lyase (493 aa).

A Mn(2+)-binding site is contributed by asparagine 172. Prenylated FMN is bound by residues isoleucine 175–arginine 177, arginine 189–leucine 191, and arginine 194–glycine 195. Residue glutamate 238 coordinates Mn(2+). The Proton donor role is filled by aspartate 287.

The protein belongs to the UbiD family. In terms of assembly, homohexamer. Requires prenylated FMN as cofactor. It depends on Mn(2+) as a cofactor.

The protein localises to the cell membrane. It catalyses the reaction a 4-hydroxy-3-(all-trans-polyprenyl)benzoate + H(+) = a 2-(all-trans-polyprenyl)phenol + CO2. It participates in cofactor biosynthesis; ubiquinone biosynthesis. Functionally, catalyzes the decarboxylation of 3-octaprenyl-4-hydroxy benzoate to 2-octaprenylphenol, an intermediate step in ubiquinone biosynthesis. The sequence is that of 3-octaprenyl-4-hydroxybenzoate carboxy-lyase from Cellvibrio japonicus (strain Ueda107) (Pseudomonas fluorescens subsp. cellulosa).